The chain runs to 170 residues: Adenine phosphoribosyltransferase (170 aa).

It belongs to the purine/pyrimidine phosphoribosyltransferase family. As to quaternary structure, homodimer.

It is found in the cytoplasm. The enzyme catalyses AMP + diphosphate = 5-phospho-alpha-D-ribose 1-diphosphate + adenine. It functions in the pathway purine metabolism; AMP biosynthesis via salvage pathway; AMP from adenine: step 1/1. In terms of biological role, catalyzes a salvage reaction resulting in the formation of AMP, that is energically less costly than de novo synthesis. The sequence is that of Adenine phosphoribosyltransferase from Streptococcus pneumoniae (strain Hungary19A-6).